Here is a 1193-residue protein sequence, read N- to C-terminus: MASAGTEHYSIGLRRGNSFKQRHPSGTVSASPSEKPSEVKVWSQAHQQVKPIWKLEKKHVGTLSAGLGTSFLGVPSQPAYFLCPSTLCSSGTTAVIAGHSNPCYLQSLPNLFSNTLLYRRTNVRQKPYQQLESFCLRSSPSEKRSFSLPQKGLPVSVTANKATSSTVFPMAQPMATSPTDPYLSLAAAGENPSRKSLASAISGKIASPLSYKPMLNNNSFMRPNSTKVPLSQATDGLKPVSSPKIQPVSWHHSGGTGDCVPQPGDHKVPQNIATVLDDVTAPITPSIPSTLNISTASVTSSQCSQSNFRMEAHPCGLDENPDSQSATKEVHFTEAVRKLAEKGLEKMPRQGYQFEQACFVNPSFQWGLLNRSRRWKPLMGQRFPQEDIGLDSAILPGTSDTLGLDSTVFCTKRISIHLLASHVHGLNPSPACGSAVDPQVLGEDRAPVPPSSLQPLGVAEVATRLSSVHLDQPGKEPEEAKDLNSCTKGGGSATDLQPNQVEPEDTEDELGDGLEDSCSHDENEEEEGDSECSSLSVVSPSESVALISRNCVDLMSKSLPNHEKVVRPALIYSLFPNVTPTIYFGTRDERVEKLPWEQRRLLRWKMSTVTPNIVKQTIGRSHFKISKRNDDWLGCWGHHMKSPGFRSIREHQKLNHFPGSFQIGRKDRLWRNLSRMQSRFGKKEFSFFPQSFILPQDSKLLRKAWESSSRQKWIVKPPASARGIGIQVIHKWSQLPKRRPLLVQRYLHKPYLISGSKFDLRIYVYVTSYDPLRIYLFSDGLVRFASCKYSPSMKSLSNKFMHLTNYSVNKKNTEYQANADETACQGHKWALKALWNYLSQKGINSDAIWEKIKDVVVKTIISSEPYVTNLLKLYVRRPYSCHELFGFDIMLDENLKPWVLEVNISPSLHSNSPLDISIKGQMIRDLLNLAGFVLPNMEDIISSSSSPSSSSGSSTSLPSSPRDKCQMTPEHFTAQKMKKAYYLTQKIPDQDFYASVLDVLTPDDVRVLVEMEDEFSRRGQFERIFPSRISSRYLRFFEQPRYFNILTTQWEQKYHGNKLKGVDLLRNWCYKGFHTGIVSDSAPLWSLPTSLMTTSKGDGTPNSASKSRKKSASEGTTLSSEDRSTPKSKKSQAGLSPISRKTLSSRSNENTSKQSKRSTPGLPVLKYSGQSSRLSAASASQSVTDSRLTAVSS.

2 disordered regions span residues 1-37 (MASA…EKPS) and 468-535 (VHLD…CSSL). Polar residues predominate over residues 24-34 (PSGTVSASPSE). The segment covering 472–482 (QPGKEPEEAKD) has biased composition (basic and acidic residues). Positions 502 to 515 (EPEDTEDELGDGLE) are enriched in acidic residues. Residues 599–942 (RRLLRWKMST…VLPNMEDIIS (344 aa)) form the TTL domain. Phosphoserine is present on Ser-686. Residues Lys-716, 722–723 (RG), 744–747 (QRYL), and 757–759 (KFD) contribute to the ATP site. A protein is bound at residue Arg-722. Arg-783 lines the L-glutamate pocket. An ATP-binding site is contributed by 804–805 (TN). Residues Tyr-806, Ser-807, and Lys-828 each contribute to the L-glutamate site. Residues Asp-888, Glu-901, and Asn-903 each contribute to the Mg(2+) site. Positions 913–1027 (PLDISIKGQM…RGQFERIFPS (115 aa)) are c-MTBD region. An L-glutamate-binding site is contributed by Lys-919. Residues 943–960 (SSSSPSSSSGSSTSLPSS) are compositionally biased toward low complexity. 2 disordered regions span residues 943 to 966 (SSSS…DKCQ) and 1092 to 1193 (MTTS…AVSS). 2 stretches are compositionally biased toward polar residues: residues 1092–1102 (MTTSKGDGTPN) and 1131–1153 (SQAG…NTSK). The segment covering 1168-1182 (SGQSSRLSAASASQS) has biased composition (low complexity). Polar residues predominate over residues 1183 to 1193 (VTDSRLTAVSS).

It belongs to the tubulin--tyrosine ligase family. Mg(2+) serves as cofactor. In terms of tissue distribution, highly expressed in testis. Expressed in brain, heart, kidney, liver, lung, muscle and spleen. In the brain, expressed in ependymal cilia, the cortex and the striatum. Expressed in blastomere.

The protein localises to the cytoplasm. It is found in the cell projection. It localises to the cilium. The protein resides in the cytoskeleton. Its subcellular location is the cilium basal body. The catalysed reaction is L-glutamyl-[protein] + L-glutamate + ATP = gamma-L-glutamyl-L-glutamyl-[protein] + ADP + phosphate + H(+). In terms of biological role, monoglutamylase which modifies both tubulin and non-tubulin proteins, adding a single glutamate on the gamma-carboxyl group of specific glutamate residues of target proteins. Involved in the side-chain initiation step of the polyglutamylation reaction but not in the elongation step. Preferentially modifies beta-tail tubulin over the alpha-tubulin. Monoglutamylates nucleosome assembly proteins NAP1L1 and NAP1L4. Monoglutamylates nucleotidyltransferase CGAS, leading to inhibition of CGAS catalytic activity, thereby preventing antiviral defense function. Involved in KLF4 glutamylation which impedes its ubiquitination, thereby leading to somatic cell reprogramming, pluripotency maintenance and embryogenesis. The polypeptide is Tubulin monoglutamylase TTLL4 (Mus musculus (Mouse)).